Here is a 388-residue protein sequence, read N- to C-terminus: Succinate--CoA ligase [ADP-forming] subunit beta (388 aa).

The 237-residue stretch at 9-245 (KELLASYGLP…KSQENERELK (237 aa)) folds into the ATP-grasp domain. Residues Lys-46, 53–55 (GRG), Glu-100, Tyr-103, and Glu-108 contribute to the ATP site. Residues Asn-200 and Asp-214 each contribute to the Mg(2+) site. Substrate is bound by residues Asn-265 and 322 to 324 (GIV).

The protein belongs to the succinate/malate CoA ligase beta subunit family. In terms of assembly, heterotetramer of two alpha and two beta subunits. The cofactor is Mg(2+).

The enzyme catalyses succinate + ATP + CoA = succinyl-CoA + ADP + phosphate. It catalyses the reaction GTP + succinate + CoA = succinyl-CoA + GDP + phosphate. It participates in carbohydrate metabolism; tricarboxylic acid cycle; succinate from succinyl-CoA (ligase route): step 1/1. Its function is as follows. Succinyl-CoA synthetase functions in the citric acid cycle (TCA), coupling the hydrolysis of succinyl-CoA to the synthesis of either ATP or GTP and thus represents the only step of substrate-level phosphorylation in the TCA. The beta subunit provides nucleotide specificity of the enzyme and binds the substrate succinate, while the binding sites for coenzyme A and phosphate are found in the alpha subunit. The chain is Succinate--CoA ligase [ADP-forming] subunit beta from Neisseria gonorrhoeae (strain ATCC 700825 / FA 1090).